Here is a 630-residue protein sequence, read N- to C-terminus: Long-chain-fatty-acid--AMP ligase FadD32 (630 aa).

ATP-binding positions include 187 to 192 (TSGSTR), Ser342, Ala346, Asp469, and Arg483.

It belongs to the ATP-dependent AMP-binding enzyme family. In terms of assembly, monomer.

The catalysed reaction is a long-chain fatty acid + holo-[ACP] + ATP = a long-chain fatty acyl-[ACP] + AMP + diphosphate. It carries out the reaction decanoate + ATP + H(+) = decanoyl-AMP + diphosphate. The enzyme catalyses dodecanoate + ATP + H(+) = dodecanoyl-AMP + diphosphate. It catalyses the reaction tetradecanoate + ATP + H(+) = tetradecanoyl-AMP + diphosphate. It functions in the pathway lipid metabolism; mycolic acid biosynthesis. With respect to regulation, the acyl-AMP ligase activity is inhibited by the alkylphosphate ester of AMP, adenosine 50-dodecylphosphate (AMPC12). Also inhibited by eicosyl-AMP (AMPC20). Involved in the biosynthesis of mycolic acids. Catalyzes the activation of long-chain fatty acids as acyl-adenylates (acyl-AMP), which are then transferred to the phosphopantetheine arm of the polyketide synthase Pks13 for further chain extension. Can use decanoate (C10), dodecanoate (C12) and tetradecanoate (C14). The polypeptide is Long-chain-fatty-acid--AMP ligase FadD32 (Mycolicibacterium smegmatis (strain ATCC 700084 / mc(2)155) (Mycobacterium smegmatis)).